A 137-amino-acid chain; its full sequence is MAMTIQLDVVSAEDSIFSGLVQSIQVTGSEGELGVQYGHAPLLTTIKAGMVNVVKQHGEEELIYVAGGVLEVQPGHISVLADTALRAGDLDEQAVLEAKKRLEENIANPSADFEYAEAAAELAETIAQLRLIQKLRK.

It belongs to the ATPase epsilon chain family. In terms of assembly, F-type ATPases have 2 components, CF(1) - the catalytic core - and CF(0) - the membrane proton channel. CF(1) has five subunits: alpha(3), beta(3), gamma(1), delta(1), epsilon(1). CF(0) has three main subunits: a, b and c.

Its subcellular location is the cell inner membrane. Its function is as follows. Produces ATP from ADP in the presence of a proton gradient across the membrane. The chain is ATP synthase epsilon chain from Pseudoalteromonas atlantica (strain T6c / ATCC BAA-1087).